A 406-amino-acid polypeptide reads, in one-letter code: Na(+)/H(+) antiporter NhaA (406 aa).

12 consecutive transmembrane segments (helical) span residues 29-49 (FAGI…NNIF), 75-95 (FIEL…GLEM), 111-131 (ILPA…YMFF), 141-161 (GWAI…SFFS), 170-190 (AFII…LALF), 195-215 (INTP…ILNY), 220-240 (QLFY…ESGI), 242-262 (GTLC…GEFN), 278-298 (YFIL…YFAF), 306-326 (ILAL…LGIM), 349-369 (FYSI…IGSI), and 382-402 (AAVI…LKYC).

The protein belongs to the NhaA Na(+)/H(+) (TC 2.A.33) antiporter family.

It localises to the cell inner membrane. It carries out the reaction Na(+)(in) + 2 H(+)(out) = Na(+)(out) + 2 H(+)(in). Functionally, na(+)/H(+) antiporter that extrudes sodium in exchange for external protons. The protein is Na(+)/H(+) antiporter NhaA of Rickettsia massiliae (strain Mtu5).